The chain runs to 418 residues: Oxalate:formate antiporter (418 aa).

Helical transmembrane passes span 17–37, 48–68, 84–104, 108–128, 141–161, 172–192, 222–242, 250–270, 288–308, 311–331, 350–370, and 378–398; these read WFYLVLAVLLMCMISGVQYSW, LGVSLAAVQTAFTLSQVIQAG, IPLMFGGAMVLAGWTFMGMVD, ALYALYTLAGAGVGIVYGIAM, LASGFTAAGYGLGVLPFLPLI, AAFMYTGLIMGILIILIAFVI, FWVLWTAFFSVNFGGLLLVAN, LGLAAGVLTIGVSIQNLFNGG, MSVVFGINAVVLALFPTIAAL, VAFIAMLAIAFFTWGGSYALF, FFWAAKATASIFGGGLGAAIA, and AFLITAITSFIAFALATFVIP. Lys-355 lines the oxalate pocket.

Belongs to the major facilitator superfamily. OFA (TC 2.A.1.11) family. Monomer.

The protein resides in the cell inner membrane. Anion transporter that carries out the exchange of divalent oxalate with monovalent formate, the product of oxalate decarboxylation, at the plasma membrane, and in doing so catalyzes the vectorial portion of a proton-motive metabolic cycle that drives ATP synthesis. The polypeptide is Oxalate:formate antiporter (oxlT) (Oxalobacter formigenes).